We begin with the raw amino-acid sequence, 74 residues long: Beta-defensin 39 (74 aa).

A signal peptide spans 1 to 23 (MKISYFLLLILSLGSSQINPVSG). Intrachain disulfides connect C29-C58, C36-C51, and C41-C59.

Belongs to the beta-defensin family. Only expressed in epididymis (caput, corpus and cauda).

It is found in the secreted. Its function is as follows. Has antibacterial activity. In Mus musculus (Mouse), this protein is Beta-defensin 39 (Defb39).